A 149-amino-acid chain; its full sequence is Large ribosomal subunit protein uL22c (149 aa).

This sequence belongs to the universal ribosomal protein uL22 family. As to quaternary structure, part of the 50S ribosomal subunit.

It is found in the plastid. The protein localises to the chloroplast. Functionally, this protein binds specifically to 23S rRNA. In terms of biological role, the globular domain of the protein is located near the polypeptide exit tunnel on the outside of the subunit, while an extended beta-hairpin is found that lines the wall of the exit tunnel in the center of the 70S ribosome. The protein is Large ribosomal subunit protein uL22c (rpl22) of Brachypodium distachyon (Purple false brome).